A 789-amino-acid polypeptide reads, in one-letter code: UPF0313 protein VC_1711 (789 aa).

In terms of domain architecture, Radical SAM core spans 363–642 (AYDMIKTSVN…KALLRYHDPA (280 aa)). Residues cysteine 377, cysteine 381, and cysteine 384 each coordinate [4Fe-4S] cluster. The interval 669 to 789 (PEKDSDLVTP…NTQRQPQRAR (121 aa)) is disordered. Over residues 683 to 698 (KSGRHGANRFATKHTH) the composition is skewed to basic residues. Composition is skewed to polar residues over residues 716-726 (RPNSGNKSNQG), 733-763 (PTGS…QRGS), and 778-789 (RGNTQRQPQRAR).

The protein belongs to the UPF0313 family. [4Fe-4S] cluster serves as cofactor.

The sequence is that of UPF0313 protein VC_1711 from Vibrio cholerae serotype O1 (strain ATCC 39315 / El Tor Inaba N16961).